Reading from the N-terminus, the 264-residue chain is Thymidylate synthase (264 aa).

R21 lines the dUMP pocket. H51 provides a ligand contact to (6R)-5,10-methylene-5,6,7,8-tetrahydrofolate. R126–R127 serves as a coordination point for dUMP. Residue C146 is the Nucleophile of the active site. DUMP is bound by residues R166–D169, N177, and H207–Y209. (6R)-5,10-methylene-5,6,7,8-tetrahydrofolate is bound at residue D169. A263 is a (6R)-5,10-methylene-5,6,7,8-tetrahydrofolate binding site.

The protein belongs to the thymidylate synthase family. Bacterial-type ThyA subfamily. As to quaternary structure, homodimer.

It is found in the cytoplasm. It catalyses the reaction dUMP + (6R)-5,10-methylene-5,6,7,8-tetrahydrofolate = 7,8-dihydrofolate + dTMP. It participates in pyrimidine metabolism; dTTP biosynthesis. Catalyzes the reductive methylation of 2'-deoxyuridine-5'-monophosphate (dUMP) to 2'-deoxythymidine-5'-monophosphate (dTMP) while utilizing 5,10-methylenetetrahydrofolate (mTHF) as the methyl donor and reductant in the reaction, yielding dihydrofolate (DHF) as a by-product. This enzymatic reaction provides an intracellular de novo source of dTMP, an essential precursor for DNA biosynthesis. The protein is Thymidylate synthase of Aeromonas salmonicida (strain A449).